Consider the following 314-residue polypeptide: Formimidoylglutamase (314 aa).

Residues histidine 127, aspartate 151, histidine 153, aspartate 155, aspartate 239, and aspartate 241 each coordinate Mn(2+).

This sequence belongs to the arginase family. Mn(2+) serves as cofactor.

The enzyme catalyses N-formimidoyl-L-glutamate + H2O = formamide + L-glutamate. It functions in the pathway amino-acid degradation; L-histidine degradation into L-glutamate; L-glutamate from N-formimidoyl-L-glutamate (hydrolase route): step 1/1. Functionally, catalyzes the conversion of N-formimidoyl-L-glutamate to L-glutamate and formamide. This chain is Formimidoylglutamase, found in Corynebacterium efficiens (strain DSM 44549 / YS-314 / AJ 12310 / JCM 11189 / NBRC 100395).